A 383-amino-acid chain; its full sequence is L-aspartate/L-glutamate decarboxylase (383 aa).

Lys-232 is subject to N6-(pyridoxal phosphate)lysine.

It belongs to the group II decarboxylase family. MfnA subfamily. In terms of assembly, monomer. Pyridoxal 5'-phosphate serves as cofactor.

The enzyme catalyses L-aspartate + H(+) = beta-alanine + CO2. The catalysed reaction is L-glutamate + H(+) = 4-aminobutanoate + CO2. It catalyses the reaction L-cysteate + H(+) = taurine + CO2. It carries out the reaction 3-sulfino-L-alanine + H(+) = hypotaurine + CO2. It functions in the pathway cofactor biosynthesis; coenzyme A biosynthesis. Its function is as follows. Catalyzes the decarboxylation of L-aspartate to produce beta-alanine, and the decarboxylation of L-glutamate to produce 4-aminobutanoate. Can also use cysteate and, to a lesser extent, cysteine sulfite (3-sulfino-L-alanine), but not L-tyrosine. Specific activities toward L-aspartate and cysteate are higher than toward L-glutamate. The sequence is that of L-aspartate/L-glutamate decarboxylase from Pyrococcus horikoshii (strain ATCC 700860 / DSM 12428 / JCM 9974 / NBRC 100139 / OT-3).